The following is a 404-amino-acid chain: Zinc finger CCCH domain-containing protein 3 (404 aa).

5 C3H1-type zinc fingers span residues arginine 47–histidine 75, arginine 90–aspartate 118, arginine 135–proline 163, serine 261–valine 289, and arginine 307–leucine 335. Over residues phenylalanine 350–asparagine 374 the composition is skewed to polar residues. The tract at residues phenylalanine 350–proline 404 is disordered. A compositionally biased stretch (basic and acidic residues) spans proline 377 to asparagine 391.

The protein resides in the nucleus. Possesses RNA-binding and ribonuclease activities in vitro. The protein is Zinc finger CCCH domain-containing protein 3 of Arabidopsis thaliana (Mouse-ear cress).